The following is an 85-amino-acid chain: RNA-binding protein Hfq (85 aa).

The Sm domain occupies 11-71 (DTFLNHVRKS…ISTIMPGHPV (61 aa)).

The protein belongs to the Hfq family. As to quaternary structure, homohexamer.

RNA chaperone that binds small regulatory RNA (sRNAs) and mRNAs to facilitate mRNA translational regulation in response to envelope stress, environmental stress and changes in metabolite concentrations. Also binds with high specificity to tRNAs. Seems to be involved in the regulation of NifA. In Azorhizobium caulinodans (strain ATCC 43989 / DSM 5975 / JCM 20966 / LMG 6465 / NBRC 14845 / NCIMB 13405 / ORS 571), this protein is RNA-binding protein Hfq.